The following is a 316-amino-acid chain: Prenytransferase adrG (316 aa).

Helical transmembrane passes span 36–56 (LLGFYLNTSPYLVGVAFCASI), 60–80 (KIPITVLLHRTILLSIWSIFL), 131–151 (VLIYLPWPCAVDCLIITFFAL), 163–183 (PQITLVNIGWAIPMAMHSLGL), 191–211 (PTVCMFLFIGLVIIMIDVIYS), 247–267 (GFLAMAGFFTGLGLSFFVVSV), and 294–314 (KSAFFLATLFWLFGFVIEYCL).

This sequence belongs to the UbiA prenyltransferase family. Mg(2+) serves as cofactor.

The protein localises to the membrane. It carries out the reaction 3,5-dimethylorsellinate + (2E,6E)-farnesyl diphosphate = (3R)-3-farnesyl-6-hydroxy-2,3,5-trimethyl-4-oxocyclohexa-1,5-diene-1-carboxylate + diphosphate + H(+). It functions in the pathway secondary metabolite biosynthesis; terpenoid biosynthesis. Functionally, prenytransferase; part of the gene cluster that mediates the biosynthesis of andrastins, meroterpenoid compounds that exhibit inhibitory activity against ras farnesyltransferase, suggesting that they could be promising leads for antitumor agents. The first step of the pathway is the synthesis of 3,5-dimethylorsellinic acid (DMOA) by the polyketide synthase adrD via condensation of one acetyl-CoA starter unit with 3 malonyl-CoA units and 2 methylations. DMAO is then converted to farnesyl-DMAO by the prenyltransferase adrG. The methyltransferase adrK catalyzes the methylation of the carboxyl group of farnesyl-DMAO to farnesyl-DMAO methyl ester which is further converted to epoxyfarnesyl-DMAO methyl ester by the FAD-dependent monooxygenase adrH. The terpene cyclase adrI then catalyzes the carbon skeletal rearrangement to generate the andrastin E, the first compound in the pathway having the andrastin scaffold, with the tetracyclic ring system. The post-cyclization tailoring enzymes adrF, adrE, adrJ, and adrA, are involved in the conversion of andrastin E into andrastin A. The short chain dehydrogenase adrF is responsible for the oxidation of the C-3 a hydroxyl group of andrastin E to yield the corresponding ketone, andrastin D. The ketoreductase adrE stereoselectively reduces the carbonyl moiety to reverse the stereochemistry of the C-3 position to yield andrastin F. The acetyltransferase adrJ is the acetyltransferase that attaches the acetyl group to the C-3 hydroxyl group of andrastin F to yield andrastin C. Finally, the cytochrome P450 monooxygenase adrA catalyzes two sequential oxidation reactions of the C-23 methyl group, to generate the corresponding alcohol andrastin B, and aldehyde andrastin A. This is Prenytransferase adrG from Penicillium roqueforti.